A 291-amino-acid polypeptide reads, in one-letter code: Ribosomal RNA small subunit methyltransferase A (291 aa).

The S-adenosyl-L-methionine site is built by His37, Leu39, Gly64, Glu85, Asp110, and Asn131.

Belongs to the class I-like SAM-binding methyltransferase superfamily. rRNA adenine N(6)-methyltransferase family. RsmA subfamily.

The protein localises to the cytoplasm. It catalyses the reaction adenosine(1518)/adenosine(1519) in 16S rRNA + 4 S-adenosyl-L-methionine = N(6)-dimethyladenosine(1518)/N(6)-dimethyladenosine(1519) in 16S rRNA + 4 S-adenosyl-L-homocysteine + 4 H(+). In terms of biological role, specifically dimethylates two adjacent adenosines (A1518 and A1519) in the loop of a conserved hairpin near the 3'-end of 16S rRNA in the 30S particle. May play a critical role in biogenesis of 30S subunits. In Dehalococcoides mccartyi (strain ATCC BAA-2266 / KCTC 15142 / 195) (Dehalococcoides ethenogenes (strain 195)), this protein is Ribosomal RNA small subunit methyltransferase A.